The sequence spans 1096 residues: Adenylate-forming reductase Nps9 (1096 aa).

Residues 39-352 form an adenylation (A) domain region; sequence DDTLTEISFL…TTEFGAPTQL (314 aa). Residues H236, 339–340, T344, and 425–428 each bind AMP; these read VQ and IIGR. The 88-residue stretch at 569 to 656 folds into the Carrier domain; the sequence is EWTVSTLEHW…LLADRVAKIA (88 aa). S605 carries the post-translational modification O-(pantetheine 4'-phosphoryl)serine. The reductase (R) domain stretch occupies residues 716–952; it reads LTGSTGGLGS…MPAEKVSAAI (237 aa). NADP(+) is bound by residues 720-723, 807-809, Y880, and K884; these read TGGL and SAW.

Belongs to the adenylate-forming reductase family.

Functionally, adenylate-forming reductase, a natural product biosynthesis enzyme that resembles non-ribosomal peptide synthetases, yet serves to modify one substrate, rather than to condense two or more building blocks. The A-domain preferentially accepts L-threonine as substrate. The natural product of the enzyme is not yet known. In Serpula lacrymans var. lacrymans (strain S7.9) (Dry rot fungus), this protein is Adenylate-forming reductase Nps9.